The sequence spans 294 residues: UPF0282 protein APE_0500.1 (294 aa).

The protein belongs to the UPF0282 family.

The chain is UPF0282 protein APE_0500.1 from Aeropyrum pernix (strain ATCC 700893 / DSM 11879 / JCM 9820 / NBRC 100138 / K1).